The chain runs to 584 residues: UvrABC system protein C (584 aa).

The region spanning 14-91 is the GIY-YIG domain; sequence HKPGCYLWKD…IKTHLPKYNI (78 aa). Positions 192-227 constitute a UVR domain; it reads DHILMILQTKEQHAVTKLDFENAQKYAEQQKALTSI.

The protein belongs to the UvrC family. In terms of assembly, interacts with UvrB in an incision complex.

It is found in the cytoplasm. The UvrABC repair system catalyzes the recognition and processing of DNA lesions. UvrC both incises the 5' and 3' sides of the lesion. The N-terminal half is responsible for the 3' incision and the C-terminal half is responsible for the 5' incision. The polypeptide is UvrABC system protein C (Ureaplasma parvum serovar 3 (strain ATCC 27815 / 27 / NCTC 11736)).